The following is a 199-amino-acid chain: N-(5'-phosphoribosyl)anthranilate isomerase (199 aa).

Belongs to the TrpF family.

It carries out the reaction N-(5-phospho-beta-D-ribosyl)anthranilate = 1-(2-carboxyphenylamino)-1-deoxy-D-ribulose 5-phosphate. It participates in amino-acid biosynthesis; L-tryptophan biosynthesis; L-tryptophan from chorismate: step 3/5. The protein is N-(5'-phosphoribosyl)anthranilate isomerase of Campylobacter jejuni subsp. jejuni serotype O:6 (strain 81116 / NCTC 11828).